A 495-amino-acid chain; its full sequence is Maintenance of mitochondrial morphology protein 1 (495 aa).

The Lumenal segment spans residues 1-22 (MALQQHEPAPFAPQSSLSFTQG). A helical membrane pass occupies residues 23–43 (FLLGQLSVVLLIGAFIKFFIF). Topologically, residues 44–495 (GEAPPPPSRG…PVGTPGIPDN (452 aa)) are cytoplasmic. 4 disordered regions span residues 63–94 (YSSVYSPPQDSQKSLREKPSTSNVLRPVPSTS), 269–320 (ASTE…SPKS), 382–428 (WPRM…EPEG), and 440–495 (GLGA…IPDN). 2 stretches are compositionally biased toward polar residues: residues 65 to 74 (SVYSPPQDSQ) and 82 to 94 (STSNVLRPVPSTS). Residues 128–379 (QPESLDWFNV…EPRVQVVGLP (252 aa)) form the SMP-LTD domain. Residues 271-289 (TEPPEPLQTPAGSPAPPTS) show a composition bias toward pro residues. A compositionally biased stretch (basic and acidic residues) spans 418–428 (FSDDHGREPEG). A compositionally biased stretch (polar residues) spans 458-469 (RSSSMTRQQSGG).

It belongs to the MMM1 family. Homodimer. Component of the ER-mitochondria encounter structure (ERMES) or MDM complex, composed of mmm1, mdm10, mdm12 and mdm34. An MMM1 homodimer associates with one molecule of mdm12 on each side in a pairwise head-to-tail manner, and the SMP-LTD domains of mmm1 and mdm12 generate a continuous hydrophobic tunnel for phospholipid trafficking.

Its subcellular location is the endoplasmic reticulum membrane. Functionally, component of the ERMES/MDM complex, which serves as a molecular tether to connect the endoplasmic reticulum (ER) and mitochondria. Components of this complex are involved in the control of mitochondrial shape and protein biogenesis, and function in nonvesicular lipid trafficking between the ER and mitochondria. The mdm12-mmm1 subcomplex functions in the major beta-barrel assembly pathway that is responsible for biogenesis of all outer membrane beta-barrel proteins, and acts in a late step after the SAM complex. The mdm10-mdm12-mmm1 subcomplex further acts in the TOM40-specific pathway after the action of the mdm12-mmm1 complex. Essential for establishing and maintaining the structure of mitochondria and maintenance of mtDNA nucleoids. The chain is Maintenance of mitochondrial morphology protein 1 from Penicillium rubens (strain ATCC 28089 / DSM 1075 / NRRL 1951 / Wisconsin 54-1255) (Penicillium chrysogenum).